Here is a 293-residue protein sequence, read N- to C-terminus: tRNA pseudouridine synthase A (293 aa).

Catalysis depends on aspartate 67, which acts as the Nucleophile. Residue tyrosine 125 participates in substrate binding.

The protein belongs to the tRNA pseudouridine synthase TruA family. Homodimer.

The enzyme catalyses uridine(38/39/40) in tRNA = pseudouridine(38/39/40) in tRNA. Its function is as follows. Formation of pseudouridine at positions 38, 39 and 40 in the anticodon stem and loop of transfer RNAs. The polypeptide is tRNA pseudouridine synthase A (Synechococcus sp. (strain CC9605)).